The chain runs to 213 residues: Transcription antitermination protein NusB (213 aa).

It belongs to the NusB family.

Functionally, involved in transcription antitermination. Required for transcription of ribosomal RNA (rRNA) genes. Binds specifically to the boxA antiterminator sequence of the ribosomal RNA (rrn) operons. This is Transcription antitermination protein NusB from Nostoc punctiforme (strain ATCC 29133 / PCC 73102).